Consider the following 1077-residue polypeptide: Carbamoyl phosphate synthase large chain (1077 aa).

Residues 1-403 (MPKRTDIQSI…SLHKALRGLE (403 aa)) form a carboxyphosphate synthetic domain region. Positions 129, 169, 175, 176, 208, 210, 215, 241, 242, 243, 285, and 299 each coordinate ATP. The 196-residue stretch at 133 to 328 (DKAMKSIGLE…IAKIAAKLAV (196 aa)) folds into the ATP-grasp 1 domain. Mg(2+) contacts are provided by glutamine 285, glutamate 299, and asparagine 301. Residues glutamine 285, glutamate 299, and asparagine 301 each coordinate Mn(2+). The segment at 404–553 (VGATGFDEMV…YSSYDDECEA (150 aa)) is oligomerization domain. A carbamoyl phosphate synthetic domain region spans residues 554–935 (NPTDKEKIMV…AYAKAELGCG (382 aa)). The ATP-grasp 2 domain maps to 678–869 (QQAVDRLGLL…LAKIAARVMA (192 aa)). ATP is bound by residues arginine 714, arginine 753, leucine 755, glutamate 760, glycine 785, valine 786, histidine 787, serine 788, glutamine 828, and glutamate 840. Residues glutamine 828, glutamate 840, and asparagine 842 each contribute to the Mg(2+) site. 3 residues coordinate Mn(2+): glutamine 828, glutamate 840, and asparagine 842. Residues 936–1077 (NVYPEGGRAL…HAQVQASLKA (142 aa)) enclose the MGS-like domain. The allosteric domain stretch occupies residues 936 to 1077 (NVYPEGGRAL…HAQVQASLKA (142 aa)).

This sequence belongs to the CarB family. Composed of two chains; the small (or glutamine) chain promotes the hydrolysis of glutamine to ammonia, which is used by the large (or ammonia) chain to synthesize carbamoyl phosphate. Tetramer of heterodimers (alpha,beta)4. Mg(2+) serves as cofactor. Requires Mn(2+) as cofactor.

The catalysed reaction is hydrogencarbonate + L-glutamine + 2 ATP + H2O = carbamoyl phosphate + L-glutamate + 2 ADP + phosphate + 2 H(+). The enzyme catalyses hydrogencarbonate + NH4(+) + 2 ATP = carbamoyl phosphate + 2 ADP + phosphate + 2 H(+). It participates in amino-acid biosynthesis; L-arginine biosynthesis; carbamoyl phosphate from bicarbonate: step 1/1. It functions in the pathway pyrimidine metabolism; UMP biosynthesis via de novo pathway; (S)-dihydroorotate from bicarbonate: step 1/3. Its function is as follows. Large subunit of the glutamine-dependent carbamoyl phosphate synthetase (CPSase). CPSase catalyzes the formation of carbamoyl phosphate from the ammonia moiety of glutamine, carbonate, and phosphate donated by ATP, constituting the first step of 2 biosynthetic pathways, one leading to arginine and/or urea and the other to pyrimidine nucleotides. The large subunit (synthetase) binds the substrates ammonia (free or transferred from glutamine from the small subunit), hydrogencarbonate and ATP and carries out an ATP-coupled ligase reaction, activating hydrogencarbonate by forming carboxy phosphate which reacts with ammonia to form carbamoyl phosphate. The polypeptide is Carbamoyl phosphate synthase large chain (Vibrio vulnificus (strain CMCP6)).